Consider the following 95-residue polypeptide: Integration host factor subunit beta (95 aa).

Residues 59-95 (RVGRNPKTGQSVRLDGKFVPHFKPGKELRDRVNEDES) form a disordered region. The span at 72–95 (LDGKFVPHFKPGKELRDRVNEDES) shows a compositional bias: basic and acidic residues.

The protein belongs to the bacterial histone-like protein family. Heterodimer of an alpha and a beta chain.

Functionally, this protein is one of the two subunits of integration host factor, a specific DNA-binding protein that functions in genetic recombination as well as in transcriptional and translational control. The polypeptide is Integration host factor subunit beta (Ectopseudomonas mendocina (strain ymp) (Pseudomonas mendocina)).